A 168-amino-acid polypeptide reads, in one-letter code: Cell division inhibitor SulA (168 aa).

The ftsZ binding stretch occupies residues 106–112 (ALLTGNY). Residues 161 to 168 (KIHSSLYH) are lon protease binding.

The protein belongs to the SulA family. As to quaternary structure, interacts with FtsZ. In terms of processing, is rapidly cleaved and degraded by the Lon protease once DNA damage is repaired.

Its function is as follows. Component of the SOS system and an inhibitor of cell division. Accumulation of SulA causes rapid cessation of cell division and the appearance of long, non-septate filaments. In the presence of GTP, binds a polymerization-competent form of FtsZ in a 1:1 ratio, thus inhibiting FtsZ polymerization and therefore preventing it from participating in the assembly of the Z ring. This mechanism prevents the premature segregation of damaged DNA to daughter cells during cell division. This is Cell division inhibitor SulA from Serratia proteamaculans (strain 568).